The following is a 347-amino-acid chain: Gas vesicle ATPase GvpN1 (347 aa).

A compositionally biased stretch (basic residues) spans 1–11 (MTNESRKRKVR). Residues 1–64 (MTNESRKRKV…EGFVPEEQSF (64 aa)) form a disordered region. Basic and acidic residues predominate over residues 18–55 (SRGDKKQGRSQSRDDKEIERLERQNDARGQESSTHVDE). Residue 91–98 (GPTGCGKT) coordinates ATP.

Belongs to the CbbQ/NirQ/NorQ/GpvN family. In terms of assembly, forms homodimers, forms a GvpN1-GvpO1 heterodimer, interacts with GvpC1 (via the latter's C-terminus) and GvpL, might interact with GvpA1.

The protein localises to the gas vesicle. Its subcellular location is the cytoplasm. It catalyses the reaction ATP + H2O = ADP + phosphate + H(+). In terms of biological role, an ATPase that functions in gas vesicle formation. A minor component of the gas vesicle, also found in soluble extracts. Probably enhances gas vesicle formation. Gas vesicles are hollow, gas filled proteinaceous nanostructures found in several microbial planktonic microorganisms. They allow positioning of halobacteria at the optimal depth for growth in the poorly aerated, shallow brine pools of their habitat. Its function is as follows. Expression of a 9.5 kb p-vac DNA fragment containing 2 divergently transcribed regions (gvpD-gvpE-gvpF-gvpG-gvpH-gvpI-gvpJ-gvpK-gvpL-gvpM and gvpA-gvpC-gvpN-gvpO) allows H.volcanii to produce gas vesicles. A similar region restores gas vesicle production in H.halobium without the p-vac locus, but which still have the c-vac locus. This is Gas vesicle ATPase GvpN1 (gvpN11) from Halobacterium salinarum (strain ATCC 700922 / JCM 11081 / NRC-1) (Halobacterium halobium).